Reading from the N-terminus, the 653-residue chain is MPSTDLKKQADAAVESDVNTNNEAVESSTKEESSNTPSTETQPEKKAEEPEAAAEPSESTSTPTNASSVATPSGTAPTSASLYVGELDPSVTEAMLFELFNSIGPVASIRVCRDAVTRRSLGYAYVNFHNMEDGEKALDELNYTLIKGRPCRIMWSQRDPSLRKMGTGNVFIKNLDPAIDNKALHDTFSAFGKILSCKVAVDELGNAKGYGFVHFDSVESANAAIEHVNGMLLNDKKVYVGHHVSRRERQSKVEALKANFTNVYIKNLDTEITEQEFSDLFGQFGEITSLSLVKDQNDKPRGFGFVNYANHECAQKAVDELNDKEYKGKKLYVGRAQKKHEREEELRKRYEQMKLEKMNKYQGVNLFIKNLQDEVDDERLKAEFSAFGTITSAKIMTDEQGKSKGFGFVCYTTPEEANKAVTEMNQRMLAGKPLYVALAQRKEVRRSQLEAQIQARNQFRLQQQVAAAAGIPAVQYGATGPLIYGPGGYPIPAAVNGRGMPMVPGHNGPMPMYPGMPTQFPAGGPAPGYPGMNARGPVPAQGRPMMMPGSVPSAGPAEAEAVPAVPGMPERFTAADLAAVPEESRKQVLGELLYPKVFVREEKLSGKITGMLLEMPNSELLELLEDDSALNERVNEAIGVLQEFVDQEPGFTE.

Positions Met1–Ala10 are enriched in basic and acidic residues. Residues Met1–Pro77 form a disordered region. Positions Asp17–Ser27 are enriched in polar residues. Low complexity predominate over residues Ala53–Ser68. The RRM 1 domain maps to Ala80–Arg158. The residue at position 167 (Thr167) is a Phosphothreonine. 3 RRM domains span residues Gly168–Ser245, Thr261–Lys338, and Val364–Arg441. The PABC domain occupies Pro569 to Asp646.

The protein belongs to the polyadenylate-binding protein type-1 family. Interacts with cid13.

The protein localises to the cytoplasm. It localises to the nucleus. Its function is as follows. Binds the poly(A) tail of mRNA. Appears to be an important mediator of the multiple roles of the poly(A) tail in mRNA biogenesis, stability and translation. In the nucleus, involved in both mRNA cleavage and polyadenylation. Is also required for efficient mRNA export to the cytoplasm. Acts in concert with a poly(A)-specific nuclease (PAN) to affect poly(A) tail shortening, which may occur concomitantly with either nucleocytoplasmic mRNA transport or translational initiation. In the cytoplasm, stimulates translation initiation and regulates mRNA decay through translation termination-coupled poly(A) shortening, probably mediated by PAN. This chain is Polyadenylate-binding protein, cytoplasmic and nuclear (pab1), found in Schizosaccharomyces pombe (strain 972 / ATCC 24843) (Fission yeast).